Here is a 250-residue protein sequence, read N- to C-terminus: Probable transcriptional regulatory protein Cphamn1_0542 (250 aa).

The protein belongs to the TACO1 family.

It is found in the cytoplasm. The protein is Probable transcriptional regulatory protein Cphamn1_0542 of Chlorobium phaeobacteroides (strain BS1).